Reading from the N-terminus, the 213-residue chain is Pyrrolidone-carboxylate peptidase (213 aa).

Catalysis depends on residues Glu78, Cys141, and His165.

The protein belongs to the peptidase C15 family. Homotetramer.

It is found in the cytoplasm. It catalyses the reaction Release of an N-terminal pyroglutamyl group from a polypeptide, the second amino acid generally not being Pro.. Its function is as follows. Removes 5-oxoproline from various penultimate amino acid residues except L-proline. This Alkaliphilus oremlandii (strain OhILAs) (Clostridium oremlandii (strain OhILAs)) protein is Pyrrolidone-carboxylate peptidase.